Here is a 524-residue protein sequence, read N- to C-terminus: Capsid scaffolding protein (524 aa).

Residues histidine 47, serine 116, and histidine 137 each act as charge relay system in the active site. The tract at residues 268–287 (DDLIPVPRSAFLNMLESTVS) is interaction with pAP. The short motif at 359-365 (RPRKRAR) is the Nuclear localization signal element. The tract at residues 359 to 378 (RPRKRAREDPEDEVSFPGEE) is disordered. Residues 504 to 524 (AETSKAATLQKLFCDEMLSKQ) form an interaction with major capsid protein region.

It belongs to the herpesviridae capsid scaffolding protein family. Homomultimer. Interacts with major capsid protein. In terms of assembly, exists in a monomer-dimer equilibrium with the dimer being the active species. Post-translationally, capsid scaffolding protein is cleaved by assemblin after formation of the spherical procapsid. As a result, the capsid obtains its mature, icosahedral shape. Cleavages occur at two or more sites: release (R-site) and maturation (M-site).

The protein resides in the host cytoplasm. The protein localises to the host nucleus. The enzyme catalyses Cleaves -Ala-|-Ser- and -Ala-|-Ala- bonds in the scaffold protein.. In terms of biological role, acts as a scaffold protein by binding major capsid protein in the cytoplasm, inducing the nuclear localization of both proteins. Multimerizes in the nucleus such as major capsid protein forms the icosahedral T=16 capsid. Autocatalytic cleavage releases the assembly protein, and subsequently abolishes interaction with major capsid protein. Cleavages products are evicted from the capsid before or during DNA packaging. Its function is as follows. Protease that plays an essential role in virion assembly within the nucleus. Catalyzes the cleavage of the assembly protein after formation of the spherical procapsid. By that cleavage, the capsid matures and gains its icosahedral shape. The cleavage sites seem to include -Ala-Ser-, -Ala-Ala-, as well as Ala-Thr bonds. Assemblin and cleavages products are evicted from the capsid before or during DNA packaging. Functionally, plays a major role in capsid assembly. Acts as a scaffold protein by binding major capsid protein. Multimerizes in the nucleus such as major capsid protein forms the icosahedral T=16 capsid. Cleaved by assemblin after capsid completion. The cleavages products are evicted from the capsid before or during DNA packaging. The protein is Capsid scaffolding protein (17) of Connochaetes taurinus (Blue wildebeest).